Here is a 176-residue protein sequence, read N- to C-terminus: Membrane glycoprotein UL144 (176 aa).

Residues 1–20 form the signal peptide; the sequence is MKPLIMLICFAVILLQLGVT. TNFR-Cys repeat units lie at residues 22–56 and 58–95; these read VCQH…SVTC and PCPN…NTVC. Intrachain disulfides connect cysteine 23/cysteine 34, cysteine 35/cysteine 48, cysteine 38/cysteine 56, cysteine 59/cysteine 71, cysteine 74/cysteine 87, and cysteine 77/cysteine 95. A helical membrane pass occupies residues 134–154; sequence LAWLSLFIFLVGIILLILYLI.

In terms of assembly, interacts with host TRIM23; this interaction causes auto-ubiquitination of TRAF6, leading to NF-kappaB activation.

The protein localises to the membrane. Activates NF-kappaB in a tumor necrosis factor receptor (TNFR)-associated factor 6 (TRAF6)-dependent manner, causing the up-regulation of the chemokine CCL22. This chain is Membrane glycoprotein UL144 (UL144), found in Homo sapiens (Human).